The chain runs to 194 residues: Kallikrein-like enzyme LV-Ka (194 aa).

Intrachain disulfides connect C7-C99, C44-C192, C78-C146, C110-C125, and C136-C161. Residues 36 to 185 (LNQEDKFICP…YTEWIQSIIA (150 aa)) form the Peptidase S1 domain. S140 acts as the Charge relay system in catalysis.

This sequence belongs to the peptidase S1 family. Snake venom subfamily. Monomer. Post-translationally, N-glycosylated. Expressed by the venom gland.

It localises to the secreted. With respect to regulation, completely inhibited by the serine protease inhibitors NPGB and PMSF, partially inhibited by benzamidines, and weakly or not inhibited by SBTI and EDTA. Functionally, shows kallikrein-like activity, releasing bradykinin from kininogen. Also activates plasminogen, which is also a plasma kallikrein activity. Is active upon the kallikrein substrates S-2266 and S-2302, suggesting a preference for Arg in P1 position. In vivo, lowers blood pressure after intravenous injection in rat. This Lachesis muta muta (Bushmaster) protein is Kallikrein-like enzyme LV-Ka.